Here is an 89-residue protein sequence, read N- to C-terminus: Elongation factor 1-beta (89 aa).

The protein belongs to the EF-1-beta/EF-1-delta family.

Promotes the exchange of GDP for GTP in EF-1-alpha/GDP, thus allowing the regeneration of EF-1-alpha/GTP that could then be used to form the ternary complex EF-1-alpha/GTP/AAtRNA. The protein is Elongation factor 1-beta of Methanococcus aeolicus (strain ATCC BAA-1280 / DSM 17508 / OCM 812 / Nankai-3).